The sequence spans 297 residues: UDP-3-O-acyl-N-acetylglucosamine deacetylase (297 aa).

Residues H79, H238, and D242 each contribute to the Zn(2+) site. The active-site Proton donor is the H265.

It belongs to the LpxC family. Zn(2+) serves as cofactor.

The enzyme catalyses a UDP-3-O-[(3R)-3-hydroxyacyl]-N-acetyl-alpha-D-glucosamine + H2O = a UDP-3-O-[(3R)-3-hydroxyacyl]-alpha-D-glucosamine + acetate. It functions in the pathway glycolipid biosynthesis; lipid IV(A) biosynthesis; lipid IV(A) from (3R)-3-hydroxytetradecanoyl-[acyl-carrier-protein] and UDP-N-acetyl-alpha-D-glucosamine: step 2/6. Functionally, catalyzes the hydrolysis of UDP-3-O-myristoyl-N-acetylglucosamine to form UDP-3-O-myristoylglucosamine and acetate, the committed step in lipid A biosynthesis. This Blochmanniella pennsylvanica (strain BPEN) protein is UDP-3-O-acyl-N-acetylglucosamine deacetylase.